The chain runs to 312 residues: Tetraacyldisaccharide 4'-kinase (312 aa).

60–67 (IAGGSGKT) lines the ATP pocket.

This sequence belongs to the LpxK family.

It catalyses the reaction a lipid A disaccharide + ATP = a lipid IVA + ADP + H(+). The protein operates within glycolipid biosynthesis; lipid IV(A) biosynthesis; lipid IV(A) from (3R)-3-hydroxytetradecanoyl-[acyl-carrier-protein] and UDP-N-acetyl-alpha-D-glucosamine: step 6/6. In terms of biological role, transfers the gamma-phosphate of ATP to the 4'-position of a tetraacyldisaccharide 1-phosphate intermediate (termed DS-1-P) to form tetraacyldisaccharide 1,4'-bis-phosphate (lipid IVA). This Helicobacter pylori (strain J99 / ATCC 700824) (Campylobacter pylori J99) protein is Tetraacyldisaccharide 4'-kinase.